We begin with the raw amino-acid sequence, 452 residues long: MITKAHKGEVGLGLPEKKKKKKKVVKEPKTQYSVLNSDNYFAEVCPRATPPLKGVIQEQAPRMPLVKKKKKKKGHSTICEEHLEPEITLRAGRTERSHSPRTQALGLSKSLSAEKRKSMSPGSRVKTSPDPRQDEEVTRVGKKLKKHKKEKKAKEATAFSGRDPWFCEAGNTVYTHSVGKDGVREQAALGQKQKQGSPREHSVKMKKKKKIHWEGDPPLGHPECSWSLESSPTKGSKKKPVRVEAPEYIPIGDGSRASVKKKVKSKKRVEQADTEEPALKRKKKKKKRQQSEVAEEPWEEEPDTDLEVVLEKKGNMDEAHIDQVRRKALQEEIDRESGKTEAYDTKKWTGTQFGQWDTAGFENEEQKLKFLKLMGGFKNLPPSFSRPSPTVARPSMALSKKAADTLQRNLQQDYDRALSWKYSRGAGLGFSTAPAKVFYIDRNASKSIKFED.

Disordered regions lie at residues 1-28 (MITKAHKGEVGLGLPEKKKKKKKVVKEP), 55-161 (VIQE…AFSG), and 184-305 (REQA…PDTD). Lysine 7 participates in a covalent cross-link: Glycyl lysine isopeptide (Lys-Gly) (interchain with G-Cter in SUMO2). Over residues 65–75 (LVKKKKKKKGH) the composition is skewed to basic residues. Residues 78–98 (ICEEHLEPEITLRAGRTERSH) are compositionally biased toward basic and acidic residues. Serine 112 is modified (phosphoserine). Residue lysine 126 forms a Glycyl lysine isopeptide (Lys-Gly) (interchain with G-Cter in SUMO2) linkage. Residues 127–139 (TSPDPRQDEEVTR) are compositionally biased toward basic and acidic residues. Serine 128 carries the post-translational modification Phosphoserine. Composition is skewed to basic residues over residues 140–151 (VGKKLKKHKKEK) and 258–267 (SVKKKVKSKK). Serine 258 carries the post-translational modification Phosphoserine. A Glycyl lysine isopeptide (Lys-Gly) (interchain with G-Cter in SUMO2) cross-link involves residue lysine 280. Acidic residues predominate over residues 293 to 305 (VAEEPWEEEPDTD). Residues 300 to 452 (EEPDTDLEVV…NASKSIKFED (153 aa)) are interaction with ZNF106. A Phosphothreonine modification is found at threonine 304. Residues lysine 313, lysine 347, lysine 367, lysine 369, and lysine 401 each participate in a glycyl lysine isopeptide (Lys-Gly) (interchain with G-Cter in SUMO2) cross-link. Arginine 424 bears the Omega-N-methylarginine mark. Lysine 436 participates in a covalent cross-link: Glycyl lysine isopeptide (Lys-Gly) (interchain with G-Cter in SUMO2).

In terms of assembly, interacts with ZNF106.

Its subcellular location is the nucleus. The protein resides in the nucleolus. The protein is Lysine-rich nucleolar protein 1 (KNOP1) of Bos taurus (Bovine).